Reading from the N-terminus, the 472-residue chain is ATP-dependent protease ATPase subunit HslU (472 aa).

ATP contacts are provided by residues Ile-20, 62–67, Asp-285, Glu-350, and Arg-422; that span reads GVGKTE.

The protein belongs to the ClpX chaperone family. HslU subfamily. A double ring-shaped homohexamer of HslV is capped on each side by a ring-shaped HslU homohexamer. The assembly of the HslU/HslV complex is dependent on binding of ATP.

It localises to the cytoplasm. ATPase subunit of a proteasome-like degradation complex; this subunit has chaperone activity. The binding of ATP and its subsequent hydrolysis by HslU are essential for unfolding of protein substrates subsequently hydrolyzed by HslV. HslU recognizes the N-terminal part of its protein substrates and unfolds these before they are guided to HslV for hydrolysis. The chain is ATP-dependent protease ATPase subunit HslU from Lactiplantibacillus plantarum (strain ATCC BAA-793 / NCIMB 8826 / WCFS1) (Lactobacillus plantarum).